Reading from the N-terminus, the 57-residue chain is uncharacterized protein (57 aa).

This is an uncharacterized protein from Halorubrum sp. PV6 (HRPV-1).